The sequence spans 337 residues: MRVLGIETSCDETGVAIYDTEAGLLANQLYSQVKLHADYGGVVPELASRDHVRKTVPLIQAALREAGLQADDIDGVAYTAGPGLVGALLVGATVGRSLAFAWEVPAVPVHHMEGHLLAPMLEDNPPAFPFVALLVSGGHTQLISVTGIGEYRLLGESVDDAAGEAFDKTAKLLGLDYPGGPMLSKMAQAGDSQRFTFPRPMTDRPGLDFSFSGLKTFAANTIRSNGDDDQTRADIARAFEDAVVDTLAIKCRRALDDTGFKRLVMAGGVSANRTLRQRLGEVMAKRGGEVFYARPEFCTDNGAMIAYAGSVRLLHGASQTLGVSVRPRWPLADLPAV.

Residues His111 and His115 each coordinate Fe cation. Residues 134–138 (LVSGG), Asp167, Gly180, and Asn272 each bind substrate. Asp300 serves as a coordination point for Fe cation.

This sequence belongs to the KAE1 / TsaD family. The cofactor is Fe(2+).

The protein localises to the cytoplasm. It carries out the reaction L-threonylcarbamoyladenylate + adenosine(37) in tRNA = N(6)-L-threonylcarbamoyladenosine(37) in tRNA + AMP + H(+). Required for the formation of a threonylcarbamoyl group on adenosine at position 37 (t(6)A37) in tRNAs that read codons beginning with adenine. Is involved in the transfer of the threonylcarbamoyl moiety of threonylcarbamoyl-AMP (TC-AMP) to the N6 group of A37, together with TsaE and TsaB. TsaD likely plays a direct catalytic role in this reaction. The sequence is that of tRNA N6-adenosine threonylcarbamoyltransferase from Pectobacterium atrosepticum (strain SCRI 1043 / ATCC BAA-672) (Erwinia carotovora subsp. atroseptica).